Consider the following 546-residue polypeptide: MPLSLLLTCLSTTVTLVSPAVLDPCSAYISLNEPWRNTDHQFDESQNQPLCDNHMNGEWYRFTGMAGDAMPTFCIPENHCGTHAPVWLNGSHPLEEDGIVQRQACASFKGNCCLWNATVEVKACPRGYYVYRLARPSVCFHVYCGHFYDICDEDCHGNCLDTTECACSPGTSLGPDGQTCFDENECEHNNGGCSEICVNLKNSHRCACGVGRVLRSDGKTCEDIEGCHNNNGGCSHSCLGSEEGYQCECPRGLVLSEDNHTCQVPVLCKSSAIEVSVPRELVGGLELFLTNTSCRGVSNGTHVNIVFSLKTCGTVVDVVNDKIVASNIVTGLPKETPGSSGDIIIRTSKLLIPVTCEFPRLYTISEGYVPNLRNAPLEIRSRNHGIFPFTLEIFKDHEFEEPYRETLPTLKLRDSLYFGIEPLVHVNGLESLVESCFATPTAKMDEILKYYLIQDGCVSDDSVKQYSSRDHLAKHFQAPVFKFVGKDHKEVFLHCRVLVCGVLDERSRCAQGCHRRVRREVGEDEDSAGLQSQTLTGGPIAIDWED.

The signal sequence occupies residues 1–19 (MPLSLLLTCLSTTVTLVSP). Asn89 and Asn116 each carry an N-linked (GlcNAc...) asparagine glycan. The EGF-like; calcium-binding domain maps to 182 to 222 (DENECEHNNGGCSEICVNLKNSHRCACGVGRVLRSDGKTCE). Disulfide bonds link Cys186/Cys197, Cys193/Cys206, and Cys208/Cys221. The ZP domain maps to 261–516 (TCQVPVLCKS…SRCAQGCHRR (256 aa)). An N-linked (GlcNAc...) asparagine glycan is attached at Asn299.

As to expression, liver-specific. Expressed only in the hepatocytes.

It localises to the nucleus envelope. Its function is as follows. May be involved in hepatocellular function and development. The sequence is that of Oncoprotein-induced transcript 3 protein (Oit3) from Mus musculus (Mouse).